Consider the following 66-residue polypeptide: Probable cytochrome b-c1 complex subunit 9 (66 aa).

The Mitochondrial matrix segment spans residues 1–20 (MSNALTNIFYKYVARRNSTW). The helical transmembrane segment at 21–46 (MAGAILGAFVLDSTVSGAVNTFFDSV) threads the bilayer. Residues 47–66 (NKGKLWKDVYAERVKKGISQ) are Mitochondrial intermembrane-facing.

This sequence belongs to the UQCR10/QCR9 family. As to quaternary structure, component of the ubiquinol-cytochrome c oxidoreductase (cytochrome b-c1 complex, complex III, CIII), a multisubunit enzyme composed of 3 respiratory subunits cytochrome b, cytochrome c1 and Rieske protein, 2 core protein subunits, and additional low-molecular weight protein subunits. The complex exists as an obligatory dimer and forms supercomplexes (SCs) in the inner mitochondrial membrane with cytochrome c oxidase (complex IV, CIV).

Its subcellular location is the mitochondrion inner membrane. Functionally, component of the ubiquinol-cytochrome c oxidoreductase, a multisubunit transmembrane complex that is part of the mitochondrial electron transport chain which drives oxidative phosphorylation. The respiratory chain contains 3 multisubunit complexes succinate dehydrogenase (complex II, CII), ubiquinol-cytochrome c oxidoreductase (cytochrome b-c1 complex, complex III, CIII) and cytochrome c oxidase (complex IV, CIV), that cooperate to transfer electrons derived from NADH and succinate to molecular oxygen, creating an electrochemical gradient over the inner membrane that drives transmembrane transport and the ATP synthase. The cytochrome b-c1 complex catalyzes electron transfer from ubiquinol to cytochrome c, linking this redox reaction to translocation of protons across the mitochondrial inner membrane, with protons being carried across the membrane as hydrogens on the quinol. In the process called Q cycle, 2 protons are consumed from the matrix, 4 protons are released into the intermembrane space and 2 electrons are passed to cytochrome c. This chain is Probable cytochrome b-c1 complex subunit 9, found in Dictyostelium discoideum (Social amoeba).